The primary structure comprises 79 residues: Translational regulator CsrA (79 aa).

The protein belongs to the CsrA/RsmA family. Homodimer; the beta-strands of each monomer intercalate to form a hydrophobic core, while the alpha-helices form wings that extend away from the core.

It localises to the cytoplasm. In terms of biological role, a translational regulator that binds mRNA to regulate translation initiation and/or mRNA stability. Usually binds in the 5'-UTR at or near the Shine-Dalgarno sequence preventing ribosome-binding, thus repressing translation. Its main target seems to be the major flagellin gene, while its function is anatagonized by FliW. The chain is Translational regulator CsrA from Syntrophus aciditrophicus (strain SB).